An 83-amino-acid chain; its full sequence is U5-theraphotoxin-Hs1d (83 aa).

The signal sequence occupies residues methionine 1–alanine 21. Residues serine 22–arginine 49 constitute a propeptide that is removed on maturation. 3 cysteine pairs are disulfide-bonded: cysteine 51/cysteine 63, cysteine 56/cysteine 68, and cysteine 62/cysteine 75.

The protein belongs to the neurotoxin 10 (Hwtx-1) family. 51 (Hntx-8) subfamily. Hntx-8 sub-subfamily. As to expression, expressed by the venom gland.

The protein resides in the secreted. Its function is as follows. Agglutinates erythrocytes. In Cyriopagopus schmidti (Chinese bird spider), this protein is U5-theraphotoxin-Hs1d.